The following is a 197-amino-acid chain: MVNYPSGVRAGGYPQKKKNQNIRYGKRGMGLEEMINQANDYYLVNHQAVIHKKPTPITVVHVDYPDRSMAKITEAYYVQPSTTDYNGVVSGKYIDFDAKETKNKTNMPLKNFHQHQITHLKNVLENGGIGFLVLGFTTLSEYYIFPASLLIKIWDKAKAGGEKSLPYKIVSKQGIKINSKMIPSLDYLPALKKLFNI.

The interval 1-21 (MVNYPSGVRAGGYPQKKKNQN) is disordered. Residues Thr-82, Asp-84, Asp-97, and Gln-116 each contribute to the Mg(2+) site.

The protein belongs to the RecU family. Mg(2+) is required as a cofactor.

It localises to the cytoplasm. It carries out the reaction Endonucleolytic cleavage at a junction such as a reciprocal single-stranded crossover between two homologous DNA duplexes (Holliday junction).. In terms of biological role, endonuclease that resolves Holliday junction intermediates in genetic recombination. Cleaves mobile four-strand junctions by introducing symmetrical nicks in paired strands. Promotes annealing of linear ssDNA with homologous dsDNA. Required for DNA repair, homologous recombination and chromosome segregation. This is Holliday junction resolvase RecU from Oenococcus oeni (strain ATCC BAA-331 / PSU-1).